Reading from the N-terminus, the 172-residue chain is Fimbrial-like protein FimF (172 aa).

The signal sequence occupies residues 1–21 (MILRRVFIAIGCVLFSPLSQA). A disulfide bond links C41 and C81.

This sequence belongs to the fimbrial protein family.

The protein localises to the fimbrium. This chain is Fimbrial-like protein FimF (fimF), found in Salmonella typhimurium (strain LT2 / SGSC1412 / ATCC 700720).